The sequence spans 1231 residues: Chromosome-associated kinesin KIF4 (1231 aa).

One can recognise a Kinesin motor domain in the interval 9–337; that stretch reads PVRVALRCRP…LRYADRARKI (329 aa). 88–95 provides a ligand contact to ATP; sequence GQTGSGKT. Residues 351–1000 are a coiled coil; it reads ELNHLKQQVQ…IKQKLTLLQV (650 aa). Serine 395 carries the phosphoserine modification. Threonine 800 carries the phosphothreonine modification. Phosphoserine is present on residues serine 802, serine 811, and serine 816. A globular region spans residues 1001–1231; that stretch reads ASKQKPHLTR…GCSPIQEESH (231 aa). Residues 1189–1212 form a disordered region; sequence HPELKSIASESQENKAIGKKKKRA. Phosphoserine occurs at positions 1224 and 1230.

The protein belongs to the TRAFAC class myosin-kinesin ATPase superfamily. Kinesin family. Chromokinesin subfamily. It depends on [2Fe-2S] cluster as a cofactor. [4Fe-4S] cluster is required as a cofactor. Expressed in pyramidal cells in juvenile hippocampus, granular cells in juvenile cerebellar cortex and in adult spleen.

It localises to the nucleus. The protein localises to the chromosome. The protein resides in the cytoplasm. Its subcellular location is the cytoskeleton. Functionally, iron-sulfur (Fe-S) cluster binding motor protein that has a role in chromosome segregation during mitosis. Required for mitotic chromosomal positioning and bipolar spindle stabilization. This is Chromosome-associated kinesin KIF4 (Kif4) from Mus musculus (Mouse).